A 638-amino-acid chain; its full sequence is Rik1-associated factor 1 (638 aa).

WD repeat units lie at residues 297-336 (KEYS…CGIF), 486-525 (TTQK…KPLS), 544-583 (EVDA…PFIQ), and 587-626 (EMNS…GNKF).

Component of the Clr4 methyltransferase complex (ClrC) composed of at least clr4, rik1, pcu4, rbx1, raf1 and raf2. The cullin pcu4, rik1, raf1, raf2 and the ring-box protein rbx1 are components of an E3 ubiquitin ligase, whose activity is essential for heterochromatin assembly. Interacts with nup189.

Its subcellular location is the cytoplasm. It localises to the nucleus. It is found in the chromosome. Functionally, component of the Clr4 methyltransferase complex (ClrC) which contributes to the establishment of heterochromatin by specifically methylating histone H3 to form H3K9me. ClrC preferentially ubiquitylates H3K14 and ClrC-mediated H3 ubiquitination promotes clr4 methyltransferase activity for the methylation of H3K9. H3K9me represents a specific tag for epigenetic transcriptional repression by recruiting swi6/HP1 to methylated histones which leads to transcriptional silencing within centromeric heterochromatin, telomeric regions and at the silent mating-type loci. Has a role in both mitotic and meiotic chromosome segregation. The chain is Rik1-associated factor 1 (raf1) from Schizosaccharomyces pombe (strain 972 / ATCC 24843) (Fission yeast).